The sequence spans 166 residues: Large ribosomal subunit protein uL10 (166 aa).

The protein belongs to the universal ribosomal protein uL10 family. As to quaternary structure, part of the ribosomal stalk of the 50S ribosomal subunit. The N-terminus interacts with L11 and the large rRNA to form the base of the stalk. The C-terminus forms an elongated spine to which L12 dimers bind in a sequential fashion forming a multimeric L10(L12)X complex.

Forms part of the ribosomal stalk, playing a central role in the interaction of the ribosome with GTP-bound translation factors. The chain is Large ribosomal subunit protein uL10 from Pseudomonas fluorescens (strain SBW25).